Consider the following 305-residue polypeptide: Ribosomal RNA small subunit methyltransferase H (305 aa).

S-adenosyl-L-methionine contacts are provided by residues 47–49, aspartate 66, phenylalanine 93, aspartate 108, and glutamine 115; that span reads GGH.

Belongs to the methyltransferase superfamily. RsmH family.

It localises to the cytoplasm. The enzyme catalyses cytidine(1402) in 16S rRNA + S-adenosyl-L-methionine = N(4)-methylcytidine(1402) in 16S rRNA + S-adenosyl-L-homocysteine + H(+). Its function is as follows. Specifically methylates the N4 position of cytidine in position 1402 (C1402) of 16S rRNA. The protein is Ribosomal RNA small subunit methyltransferase H of Prochlorococcus marinus (strain MIT 9211).